Consider the following 273-residue polypeptide: Large ribosomal subunit protein uL2 (273 aa).

Disordered regions lie at residues 34-54 and 223-273; these read LEKKSKSGGRNNNGRITTRHI and VAMN…RRRK.

It belongs to the universal ribosomal protein uL2 family. As to quaternary structure, part of the 50S ribosomal subunit. Forms a bridge to the 30S subunit in the 70S ribosome.

Its function is as follows. One of the primary rRNA binding proteins. Required for association of the 30S and 50S subunits to form the 70S ribosome, for tRNA binding and peptide bond formation. It has been suggested to have peptidyltransferase activity; this is somewhat controversial. Makes several contacts with the 16S rRNA in the 70S ribosome. The protein is Large ribosomal subunit protein uL2 of Azotobacter vinelandii (strain DJ / ATCC BAA-1303).